A 227-amino-acid chain; its full sequence is uncharacterized protein (227 aa).

The signal sequence occupies residues Met-1–Ala-25.

It to R.conorii RC1281.

This is an uncharacterized protein from Rickettsia conorii (strain ATCC VR-613 / Malish 7).